Reading from the N-terminus, the 766-residue chain is 5-methyltetrahydropteroyltriglutamate--homocysteine methyltransferase (766 aa).

Residues R16–K19 and K119 each bind 5-methyltetrahydropteroyltri-L-glutamate. Residues I440–S442 and E493 contribute to the L-homocysteine site. L-methionine is bound by residues I440–S442 and E493. Residues R524 to C525 and W570 contribute to the 5-methyltetrahydropteroyltri-L-glutamate site. D608 contacts L-homocysteine. D608 provides a ligand contact to L-methionine. E614 serves as a coordination point for 5-methyltetrahydropteroyltri-L-glutamate. 3 residues coordinate Zn(2+): H650, C652, and E674. The Proton donor role is filled by H703. Residue C735 coordinates Zn(2+).

This sequence belongs to the vitamin-B12 independent methionine synthase family. The cofactor is Zn(2+).

It catalyses the reaction 5-methyltetrahydropteroyltri-L-glutamate + L-homocysteine = tetrahydropteroyltri-L-glutamate + L-methionine. It functions in the pathway amino-acid biosynthesis; L-methionine biosynthesis via de novo pathway; L-methionine from L-homocysteine (MetE route): step 1/1. In terms of biological role, catalyzes the transfer of a methyl group from 5-methyltetrahydrofolate to homocysteine resulting in methionine formation. In Pseudomonas aeruginosa (strain ATCC 15692 / DSM 22644 / CIP 104116 / JCM 14847 / LMG 12228 / 1C / PRS 101 / PAO1), this protein is 5-methyltetrahydropteroyltriglutamate--homocysteine methyltransferase.